The primary structure comprises 82 residues: MNTFLWILLVIIALLAGLVGGTFIARKQMEKYLEENPPLNEDVIRNMMSQMGQKPSEAKVQQVVRQMNKQQKAAKAKAKKKK.

A helical transmembrane segment spans residues 4 to 24; the sequence is FLWILLVIIALLAGLVGGTFI.

This sequence belongs to the UPF0154 family.

It localises to the membrane. This chain is UPF0154 protein SMU_1719c, found in Streptococcus mutans serotype c (strain ATCC 700610 / UA159).